Consider the following 304-residue polypeptide: Olfactory receptor 52A4 (304 aa).

At 1 to 32 (MALPITNGTLFMPFVLTFIGIPGFESVQCWIG) the chain is on the extracellular side. Asn7 is a glycosylation site (N-linked (GlcNAc...) asparagine). The chain crosses the membrane as a helical span at residues 33-53 (IPFCATYVIALIGNSLLLIII). Residues 54-61 (KSEPSLHE) lie on the Cytoplasmic side of the membrane. A helical membrane pass occupies residues 62–82 (PMYIFLATLGATDISLSTSIV). At 83–103 (PKMLDIFWFHLPEIYFDACLF) the chain is on the extracellular side. Cys101 and Cys184 form a disulfide bridge. The chain crosses the membrane as a helical span at residues 104–124 (QMWLIHTFQGIESGVLLAMAL). At 125-146 (DRCVAICYPLRRAIVFTRQLVT) the chain is on the cytoplasmic side. The chain crosses the membrane as a helical span at residues 147-167 (YIVVGVTLRPAILVIPCLLLI). The Extracellular portion of the chain corresponds to 168–203 (KCHLKLYRTKLIYHTYCERVALVKLATEDVYINKVY). Residues 204-224 (GILGAFIVGGLDFIFITLSYI) traverse the membrane as a helical segment. Residues 225-255 (QIFITVFHLPLKEARLKVFNTCIPHIYVFFQ) lie on the Cytoplasmic side of the membrane. The helical transmembrane segment at 256 to 276 (FYLLAFFFIFYSQIWILYPII) threads the bilayer. Topologically, residues 277-279 (CTY) are extracellular. A helical transmembrane segment spans residues 280-300 (HLVQSLPTGPTIPQPLYLWVK). Residues 301-304 (DQTH) are Cytoplasmic-facing.

This sequence belongs to the G-protein coupled receptor 1 family.

It is found in the cell membrane. Odorant receptor. In Homo sapiens (Human), this protein is Olfactory receptor 52A4.